The chain runs to 241 residues: Biosynthetic peptidoglycan transglycosylase (241 aa).

The helical transmembrane segment at 19–39 (AILAVLGVWIAGILLFSVMPV) threads the bilayer.

It belongs to the glycosyltransferase 51 family.

The protein resides in the cell inner membrane. The catalysed reaction is [GlcNAc-(1-&gt;4)-Mur2Ac(oyl-L-Ala-gamma-D-Glu-L-Lys-D-Ala-D-Ala)](n)-di-trans,octa-cis-undecaprenyl diphosphate + beta-D-GlcNAc-(1-&gt;4)-Mur2Ac(oyl-L-Ala-gamma-D-Glu-L-Lys-D-Ala-D-Ala)-di-trans,octa-cis-undecaprenyl diphosphate = [GlcNAc-(1-&gt;4)-Mur2Ac(oyl-L-Ala-gamma-D-Glu-L-Lys-D-Ala-D-Ala)](n+1)-di-trans,octa-cis-undecaprenyl diphosphate + di-trans,octa-cis-undecaprenyl diphosphate + H(+). It participates in cell wall biogenesis; peptidoglycan biosynthesis. Its function is as follows. Peptidoglycan polymerase that catalyzes glycan chain elongation from lipid-linked precursors. In Cronobacter sakazakii (strain ATCC BAA-894) (Enterobacter sakazakii), this protein is Biosynthetic peptidoglycan transglycosylase.